We begin with the raw amino-acid sequence, 158 residues long: MSRSQKNDNFIDKTFTILADVLVKLLPTSQNAKKAFSYYREGMAAQAEGEYAQALESYYHALEFEEDVIDRSYIIYNIGLIYASNGEDEQALEYYHQALELNPRLVQALNNIAVIYHKQGMTYQDEQLLQKAAAYWRKAIQLAPGQYLEAQNWLKNMV.

3 TPR repeats span residues 35-68 (AFSY…EEDV), 72-105 (SYII…NPRL), and 113-146 (AVIY…APGQ).

It belongs to the Ycf3 family.

The protein resides in the plastid. Its subcellular location is the chloroplast thylakoid membrane. In terms of biological role, essential for the assembly of the photosystem I (PSI) complex. May act as a chaperone-like factor to guide the assembly of the PSI subunits. The chain is Photosystem I assembly protein Ycf3 from Cyanidioschyzon merolae (strain NIES-3377 / 10D) (Unicellular red alga).